The sequence spans 450 residues: MGETMSKRLKFHLGEAEMEERSFPNPFPDYEAAASAAGLAAGSAEETGRVCPLPTTEDPGLPFHPNGKIVPNFIKRIQTKIKDLLQQMEEGLKTADPHDCSAYTGWTGIALLYLQLYRVTGDQTYLLRSLDYVKRTLRNLSGRRVTFLCGDAGPLAVGAVIYHKLKSECESQECITKLLQMHRTIVCQESELPDELLYGRAGYLYALLYLNTEIGPGTVGETAIKEVVSAIIESGKSLSREERKSERCPLLYQWHRKQYVGAAHGMAGIYYMLMQPEAKVDQETLTEMVKPSIDYVRHKKFRSGNYPSSLSNETDRLVHWCHGAPGVIHVLLQAYQVFKEEKYLKEAMECSDVIWQRGLLRKGYGICHGTSGNGYSFLSLYRLTQDKKYLYRACKFAEWCLDYGAHGCRIPDRPYSLFEGMAGAVHFLSDILVPETARFPAFELGFLQKD.

A lipid anchor (N-myristoyl glycine) is attached at Gly2. Residues 2-14 are interaction with inositol phospholipids; it reads GETMSKRLKFHLG. At Tyr198 the chain carries Phosphotyrosine.

The protein belongs to the LanC-like protein family. In terms of assembly, interacts with an array of inositol phospholipids such as phosphatidylinositol 3-phosphate (PI3P), phosphatidylinositol 4-phosphate (PI4P) and phosphatidylinositol 5-phosphate (PI5P). PIP-binding enhances membrane association. In terms of processing, myristoylated. Essential for membrane association.

The protein resides in the nucleus. The protein localises to the cytoplasm. It is found in the cell membrane. Functionally, necessary for abscisic acid (ABA) binding on the cell membrane and activation of the ABA signaling pathway in granulocytes. This Mus musculus (Mouse) protein is LanC-like protein 2 (Lancl2).